The following is a 288-amino-acid chain: Pantothenate synthetase (288 aa).

30 to 37 contributes to the ATP binding site; it reads MGFLHEGH. His-37 acts as the Proton donor in catalysis. Residue Gln-61 participates in (R)-pantoate binding. Beta-alanine is bound at residue Gln-61. Position 147-150 (147-150) interacts with ATP; the sequence is GMKD. Gln-153 lines the (R)-pantoate pocket. ATP is bound at residue 184–187; sequence KSSR.

This sequence belongs to the pantothenate synthetase family. In terms of assembly, homodimer.

It localises to the cytoplasm. It catalyses the reaction (R)-pantoate + beta-alanine + ATP = (R)-pantothenate + AMP + diphosphate + H(+). The protein operates within cofactor biosynthesis; (R)-pantothenate biosynthesis; (R)-pantothenate from (R)-pantoate and beta-alanine: step 1/1. Its function is as follows. Catalyzes the condensation of pantoate with beta-alanine in an ATP-dependent reaction via a pantoyl-adenylate intermediate. The chain is Pantothenate synthetase from Bacillus licheniformis (strain ATCC 14580 / DSM 13 / JCM 2505 / CCUG 7422 / NBRC 12200 / NCIMB 9375 / NCTC 10341 / NRRL NRS-1264 / Gibson 46).